Here is a 68-residue protein sequence, read N- to C-terminus: Preprofallaxidin-5 (68 aa).

An N-terminal signal peptide occupies residues 1–22 (MASLKKSLFLVLFLGFVSLSIC). Residues 23 to 51 (EEEKREDKEDEGENEEAEENHEERSEEKR) constitute a propeptide that is removed on maturation. A disordered region spans residues 24 to 50 (EEKREDKEDEGENEEAEENHEERSEEK). Positions 30–42 (KEDEGENEEAEEN) are enriched in acidic residues. Leu-64 carries the leucine amide modification. Residue Ser-68 is a propeptide.

Belongs to the frog skin active peptide (FSAP) family. Brevinin subfamily. In terms of tissue distribution, expressed by the skin glands.

The protein localises to the secreted. This is Preprofallaxidin-5 from Litoria fallax (Eastern dwarf tree frog).